The primary structure comprises 212 residues: Mediator of RNA polymerase II transcription subunit 20 (212 aa).

It belongs to the Mediator complex subunit 20 family. As to quaternary structure, component of the Mediator complex, which is composed of MED1, MED4, MED6, MED7, MED8, MED9, MED10, MED11, MED12, MED13, MED13L, MED14, MED15, MED16, MED17, MED18, MED19, MED20, MED21, MED22, MED23, MED24, MED25, MED26, MED27, MED29, MED30, MED31, CCNC, CDK8 and CDC2L6/CDK11. The MED12, MED13, CCNC and CDK8 subunits form a distinct module termed the CDK8 module. Mediator containing the CDK8 module is less active than Mediator lacking this module in supporting transcriptional activation. Individual preparations of the Mediator complex lacking one or more distinct subunits have been variously termed ARC, CRSP, DRIP, PC2, SMCC and TRAP. Interacts with PPARG.

It localises to the nucleus. Functionally, component of the Mediator complex, a coactivator involved in the regulated transcription of nearly all RNA polymerase II-dependent genes. Mediator functions as a bridge to convey information from gene-specific regulatory proteins to the basal RNA polymerase II transcription machinery. Mediator is recruited to promoters by direct interactions with regulatory proteins and serves as a scaffold for the assembly of a functional preinitiation complex with RNA polymerase II and the general transcription factors. In Macaca fascicularis (Crab-eating macaque), this protein is Mediator of RNA polymerase II transcription subunit 20 (MED20).